The primary structure comprises 296 residues: MEQFRNIGLLGRMGSVQVVETLKRLKNYLVGEGYAVILEEATAAVLPGHNVQVSSKKMLGEICDLVIVVGGDGSLLGAARALAGCNVPVLGVNRGRLGFLTDITPTEMEPQLAEVLSGKYVEESRFLLDAYVKRNGEPVGYGCGLNDIVLHPGKSTRMIGFDLYIEGQFVNSQRSDGLIVSTPTGSTAYALSAGGPIMHPRLDAIVLVPMFPHTLSSRPIVVDGNSEIKIIIGDYNQTYPHVSCDGQTHVTCAPGDTVTICKKPQKLRLIHPMNHNFYQICRDKLGWSSSRDQGGQ.

Catalysis depends on D72, which acts as the Proton acceptor. NAD(+) contacts are provided by residues 72–73 (DG), 146–147 (ND), R157, R174, D176, 187–192 (TAYALS), and Q247.

This sequence belongs to the NAD kinase family. The cofactor is a divalent metal cation.

It is found in the cytoplasm. It carries out the reaction NAD(+) + ATP = ADP + NADP(+) + H(+). Involved in the regulation of the intracellular balance of NAD and NADP, and is a key enzyme in the biosynthesis of NADP. Catalyzes specifically the phosphorylation on 2'-hydroxyl of the adenosine moiety of NAD to yield NADP. The sequence is that of NAD kinase from Hahella chejuensis (strain KCTC 2396).